A 205-amino-acid polypeptide reads, in one-letter code: Pyridoxal 5'-phosphate synthase subunit PdxT (205 aa).

54 to 56 (GES) contributes to the L-glutamine binding site. Cys86 functions as the Nucleophile in the catalytic mechanism. L-glutamine-binding positions include Arg118 and 147–148 (IR). Residues His183 and Glu185 each act as charge relay system in the active site.

The protein belongs to the glutaminase PdxT/SNO family. As to quaternary structure, in the presence of PdxS, forms a dodecamer of heterodimers. Only shows activity in the heterodimer.

The enzyme catalyses aldehydo-D-ribose 5-phosphate + D-glyceraldehyde 3-phosphate + L-glutamine = pyridoxal 5'-phosphate + L-glutamate + phosphate + 3 H2O + H(+). It carries out the reaction L-glutamine + H2O = L-glutamate + NH4(+). The protein operates within cofactor biosynthesis; pyridoxal 5'-phosphate biosynthesis. Functionally, catalyzes the hydrolysis of glutamine to glutamate and ammonia as part of the biosynthesis of pyridoxal 5'-phosphate. The resulting ammonia molecule is channeled to the active site of PdxS. In Nitrosopumilus maritimus (strain SCM1), this protein is Pyridoxal 5'-phosphate synthase subunit PdxT.